The primary structure comprises 715 residues: Fatty acid oxidation complex subunit alpha (715 aa).

An enoyl-CoA hydratase region spans residues 1–190 (MTTTSAFMLN…KAGLVDDVVP (190 aa)). The 3-hydroxyacyl-CoA dehydrogenase stretch occupies residues 306–715 (GPLNSVGILG…WTNGETDQGN (410 aa)).

The protein in the N-terminal section; belongs to the enoyl-CoA hydratase/isomerase family. It in the central section; belongs to the 3-hydroxyacyl-CoA dehydrogenase family. As to quaternary structure, heterotetramer of two alpha chains (FadJ) and two beta chains (FadI).

It is found in the cytoplasm. It catalyses the reaction a (3S)-3-hydroxyacyl-CoA = a (2E)-enoyl-CoA + H2O. The catalysed reaction is a 4-saturated-(3S)-3-hydroxyacyl-CoA = a (3E)-enoyl-CoA + H2O. It carries out the reaction a (3S)-3-hydroxyacyl-CoA + NAD(+) = a 3-oxoacyl-CoA + NADH + H(+). The enzyme catalyses (3S)-3-hydroxybutanoyl-CoA = (3R)-3-hydroxybutanoyl-CoA. The protein operates within lipid metabolism; fatty acid beta-oxidation. Functionally, catalyzes the formation of a hydroxyacyl-CoA by addition of water on enoyl-CoA. Also exhibits 3-hydroxyacyl-CoA epimerase and 3-hydroxyacyl-CoA dehydrogenase activities. The polypeptide is Fatty acid oxidation complex subunit alpha (Salmonella enteritidis PT4 (strain P125109)).